We begin with the raw amino-acid sequence, 145 residues long: D-aminoacyl-tRNA deacylase (145 aa).

The Gly-cisPro motif, important for rejection of L-amino acids signature appears at 137–138; it reads GP.

It belongs to the DTD family. In terms of assembly, homodimer.

Its subcellular location is the cytoplasm. It carries out the reaction glycyl-tRNA(Ala) + H2O = tRNA(Ala) + glycine + H(+). The catalysed reaction is a D-aminoacyl-tRNA + H2O = a tRNA + a D-alpha-amino acid + H(+). Functionally, an aminoacyl-tRNA editing enzyme that deacylates mischarged D-aminoacyl-tRNAs. Also deacylates mischarged glycyl-tRNA(Ala), protecting cells against glycine mischarging by AlaRS. Acts via tRNA-based rather than protein-based catalysis; rejects L-amino acids rather than detecting D-amino acids in the active site. By recycling D-aminoacyl-tRNA to D-amino acids and free tRNA molecules, this enzyme counteracts the toxicity associated with the formation of D-aminoacyl-tRNA entities in vivo and helps enforce protein L-homochirality. In Pseudomonas savastanoi pv. phaseolicola (strain 1448A / Race 6) (Pseudomonas syringae pv. phaseolicola (strain 1448A / Race 6)), this protein is D-aminoacyl-tRNA deacylase.